A 442-amino-acid polypeptide reads, in one-letter code: Cation channel sperm-associated protein 4 (442 aa).

The Cytoplasmic segment spans residues 1 to 66 (MSEKHKWWQQ…TQMYIKQLLR (66 aa)). Residues 67 to 88 (HPAFQLLLAFLLLSNAITIALR) traverse the membrane as a helical segment. At 89-98 (TNSYLGQKHY) the chain is on the extracellular side. A helical membrane pass occupies residues 99–125 (ELFSTIDDIVLTILICEVLLGWLNGFW). Residues 126–129 (IFWK) lie on the Cytoplasmic side of the membrane. A helical membrane pass occupies residues 130-153 (DGWNILNFAIVFILFMGFFIKQLD). Topologically, residues 154–156 (MVA) are extracellular. The helical transmembrane segment at 157 to 175 (ITYPLRVLRLVHVCMAVEP) threads the bilayer. The Cytoplasmic segment spans residues 176-188 (LARIIKVILQSMP). Residues 189–212 (DLANVMALILFFMLVFSVFGVTLF) traverse the membrane as a helical segment. The Extracellular segment spans residues 213–222 (GAFVPKHFQN). The helical; Pore-forming intramembrane region spans 223 to 234 (MGVALYTLFICI). Residues 235-255 (TQDGWLDIYTDFQMDEREYAM) are Extracellular-facing. Residues 256–283 (EVGGAIYFAVFITLGAFIGLNLFVVVVT) form a helical membrane-spanning segment. Over 284 to 442 (TNLEQMMKTG…NMVNKHKFSH (159 aa)) the chain is Cytoplasmic.

The protein belongs to the cation channel sperm-associated (TC 1.A.1.19) family. In terms of assembly, component of the CatSper complex or CatSpermasome composed of the core pore-forming members CATSPER1, CATSPER2, CATSPER3 and CATSPER4 as well as auxiliary members CATSPERB, CATSPERG2, CATSPERD, CATSPERE, CATSPERZ, C2CD6/CATSPERT, SLCO6C1, TMEM249, TMEM262 and EFCAB9. HSPA1 may be an additional auxiliary complex member. The core complex members CATSPER1, CATSPER2, CATSPER3 and CATSPER4 form a heterotetrameric channel. The auxiliary CATSPERB, CATSPERG2, CATSPERD and CATSPERE subunits form a pavilion-like structure over the pore which stabilizes the complex through interactions with CATSPER4, CATSPER3, CATSPER1 and CATSPER2 respectively. SLCO6C1 interacts with CATSPERE and TMEM262/CATSPERH interacts with CATSPERB, further stabilizing the complex. C2CD6/CATSPERT interacts at least with CATSPERD and is required for targeting the CatSper complex in the flagellar membrane. In terms of tissue distribution, testis-specific.

The protein localises to the cell projection. Its subcellular location is the cilium. It is found in the flagellum membrane. It carries out the reaction Ca(2+)(in) = Ca(2+)(out). In contrast to the human ortholog, not activated by progesterone. Activated by intracellular alkalinization. Pore-forming subunit of the CatSper complex, a sperm-specific voltage-gated calcium channel that plays a central role in sperm cell hyperactivation. Controls calcium entry to mediate the hyperactivated motility, a step needed for sperm motility which is essential late in the preparation of sperm for fertilization. The polypeptide is Cation channel sperm-associated protein 4 (Catsper4) (Mus musculus (Mouse)).